A 518-amino-acid polypeptide reads, in one-letter code: Laccase (518 aa).

The first 21 residues, 1 to 21 (MSRFQSLLSFVLVSLAAVANA), serve as a signal peptide directing secretion. Plastocyanin-like domains follow at residues 23–148 (IGPV…FVVY) and 160–302 (IDND…ILRY). N72 and N75 each carry an N-linked (GlcNAc...) asparagine glycan. Cu cation contacts are provided by H85, H87, H130, and H132. Cystine bridges form between C106-C507 and C138-C226. N229 is a glycosylation site (N-linked (GlcNAc...) asparagine). Positions 308–330 (VEPTTTQTTSTKPLNEADLHPLT) are disordered. N-linked (GlcNAc...) asparagine glycans are attached at residues N354, N362, and N398. The Plastocyanin-like 3 domain maps to 369–489 (SVPVLLQILS…AGFAVVLAED (121 aa)). Cu cation-binding residues include H416, H419, H421, H471, C472, H473, and H477.

This sequence belongs to the multicopper oxidase family. Cu cation is required as a cofactor.

It localises to the secreted. The enzyme catalyses 4 hydroquinone + O2 = 4 benzosemiquinone + 2 H2O. Functionally, lignin degradation and detoxification of lignin-derived products. Cleaves the C-C and C-O bonds of some phenolic lignin model compounds (such as O- and P-quinols, aminophenols and phenylenediamine). May also be involved in synthesis of phenoxazinone pigments. This is Laccase (LCC3-1) from Pycnoporus cinnabarinus (Cinnabar-red polypore).